The sequence spans 355 residues: Protein-glutamate methylesterase/protein-glutamine glutaminase (355 aa).

Residues 4 to 121 (KVLIIDDSAL…ANGMHEYSEM (118 aa)) enclose the Response regulatory domain. D55 carries the 4-aspartylphosphate modification. The region spanning 156 to 348 (LISSEKLIII…GRVLQYLAAN (193 aa)) is the CheB-type methylesterase domain. Active-site residues include S168, H194, and D290.

It belongs to the CheB family. Post-translationally, phosphorylated by CheA. Phosphorylation of the N-terminal regulatory domain activates the methylesterase activity.

The protein localises to the cytoplasm. The catalysed reaction is [protein]-L-glutamate 5-O-methyl ester + H2O = L-glutamyl-[protein] + methanol + H(+). It catalyses the reaction L-glutaminyl-[protein] + H2O = L-glutamyl-[protein] + NH4(+). Involved in chemotaxis. Part of a chemotaxis signal transduction system that modulates chemotaxis in response to various stimuli. Catalyzes the demethylation of specific methylglutamate residues introduced into the chemoreceptors (methyl-accepting chemotaxis proteins or MCP) by CheR. Also mediates the irreversible deamidation of specific glutamine residues to glutamic acid. The protein is Protein-glutamate methylesterase/protein-glutamine glutaminase of Methylobacillus flagellatus (strain ATCC 51484 / DSM 6875 / VKM B-1610 / KT).